The following is a 301-amino-acid chain: Diaminopimelate epimerase (301 aa).

Residues asparagine 15, glutamine 47, and asparagine 67 each contribute to the substrate site. Cysteine 76 functions as the Proton donor in the catalytic mechanism. Substrate is bound by residues 77–78, asparagine 163, asparagine 197, and 215–216; these read GN and ER. Cysteine 224 acts as the Proton acceptor in catalysis. 225–226 provides a ligand contact to substrate; the sequence is GS.

The protein belongs to the diaminopimelate epimerase family. Homodimer.

It localises to the cytoplasm. The enzyme catalyses (2S,6S)-2,6-diaminopimelate = meso-2,6-diaminopimelate. The protein operates within amino-acid biosynthesis; L-lysine biosynthesis via DAP pathway; DL-2,6-diaminopimelate from LL-2,6-diaminopimelate: step 1/1. Its function is as follows. Catalyzes the stereoinversion of LL-2,6-diaminopimelate (L,L-DAP) to meso-diaminopimelate (meso-DAP), a precursor of L-lysine and an essential component of the bacterial peptidoglycan. The protein is Diaminopimelate epimerase of Rhizobium rhizogenes (strain K84 / ATCC BAA-868) (Agrobacterium radiobacter).